We begin with the raw amino-acid sequence, 185 residues long: Ribosome-recycling factor (185 aa).

The protein belongs to the RRF family.

It localises to the cytoplasm. Its function is as follows. Responsible for the release of ribosomes from messenger RNA at the termination of protein biosynthesis. May increase the efficiency of translation by recycling ribosomes from one round of translation to another. The chain is Ribosome-recycling factor from Haemophilus influenzae (strain 86-028NP).